The chain runs to 81 residues: Protein RALF-like 6 (81 aa).

The N-terminal stretch at 1–29 is a signal peptide; sequence MAAHKKSHIRIFFVSVMIILSLFSGFGEG. Intrachain disulfides connect Cys46/Cys54 and Cys66/Cys72.

The protein belongs to the plant rapid alkalinization factor (RALF) family.

It is found in the secreted. Cell signaling peptide that may regulate plant stress, growth, and development. Mediates a rapid alkalinization of extracellular space by mediating a transient increase in the cytoplasmic Ca(2+) concentration leading to a calcium-dependent signaling events through a cell surface receptor and a concomitant activation of some intracellular mitogen-activated protein kinases. This is Protein RALF-like 6 (RALFL6) from Arabidopsis thaliana (Mouse-ear cress).